Here is a 256-residue protein sequence, read N- to C-terminus: 1-(5-phosphoribosyl)-5-[(5-phosphoribosylamino)methylideneamino] imidazole-4-carboxamide isomerase (256 aa).

Asp-8 (proton acceptor) is an active-site residue. The active-site Proton donor is the Asp-129.

The protein belongs to the HisA/HisF family.

The protein resides in the cytoplasm. The catalysed reaction is 1-(5-phospho-beta-D-ribosyl)-5-[(5-phospho-beta-D-ribosylamino)methylideneamino]imidazole-4-carboxamide = 5-[(5-phospho-1-deoxy-D-ribulos-1-ylimino)methylamino]-1-(5-phospho-beta-D-ribosyl)imidazole-4-carboxamide. Its pathway is amino-acid biosynthesis; L-histidine biosynthesis; L-histidine from 5-phospho-alpha-D-ribose 1-diphosphate: step 4/9. This is 1-(5-phosphoribosyl)-5-[(5-phosphoribosylamino)methylideneamino] imidazole-4-carboxamide isomerase from Prochlorococcus marinus (strain NATL2A).